Here is a 278-residue protein sequence, read N- to C-terminus: Secoisolariciresinol dehydrogenase (278 aa).

NAD(+) is bound by residues glycine 23–isoleucine 28, aspartate 47, valine 73, and asparagine 99. Substrate contacts are provided by serine 104 and serine 164. The Proton donor/acceptor role is filled by tyrosine 167. Positions 171 and 200 each coordinate NAD(+).

Belongs to the short-chain dehydrogenases/reductases (SDR) family. In terms of assembly, homotetramer.

It catalyses the reaction (-)-secoisolariciresinol + 2 NAD(+) = (-)-matairesinol + 2 NADH + 2 H(+). Its function is as follows. Oxidoreductase involved in lignan biosynthesis. Catalyzes the stereospecific conversion of (-)-secoisolariciresinol to (-)-matairesinol via a lactol intermediate. The polypeptide is Secoisolariciresinol dehydrogenase (Podophyllum peltatum (American mandrake)).